The sequence spans 201 residues: MNKSRIDKQNEVYNFIKLQIKEKGYPPSVREICKAVGLSSTSSVHFHLKRLEKEGLIKRDSSKTRAIEIVDPTSKKEVINVPIVGTITAGNPILAIENIEDVFPLPIDYVKNTKDLFMLKVSGESMIEAGILDGDLAIIEKTDSANNGDIVVALIDNEATLKRFFKESSYIRLQPENKSMKPIILENCKVLGRLVGIYRKY.

Residues 29 to 49 (VREICKAVGLSSTSSVHFHLK) constitute a DNA-binding region (H-T-H motif). Active-site for autocatalytic cleavage activity residues include serine 125 and lysine 162.

The protein belongs to the peptidase S24 family. In terms of assembly, homodimer.

It carries out the reaction Hydrolysis of Ala-|-Gly bond in repressor LexA.. Represses a number of genes involved in the response to DNA damage (SOS response), including recA and lexA. In the presence of single-stranded DNA, RecA interacts with LexA causing an autocatalytic cleavage which disrupts the DNA-binding part of LexA, leading to derepression of the SOS regulon and eventually DNA repair. The polypeptide is LexA repressor (Clostridium botulinum (strain 657 / Type Ba4)).